The sequence spans 177 residues: Nucleoside triphosphate/diphosphate phosphatase (177 aa).

Arginine 23 (proton donor) is an active-site residue. Asparagine 87, aspartate 103, aspartate 105, aspartate 107, aspartate 120, and glutamate 123 together coordinate Mg(2+).

The protein belongs to the Ntdp family. Requires Mg(2+) as cofactor.

It carries out the reaction a ribonucleoside 5'-triphosphate + H2O = a ribonucleoside 5'-diphosphate + phosphate + H(+). The catalysed reaction is a ribonucleoside 5'-diphosphate + H2O = a ribonucleoside 5'-phosphate + phosphate + H(+). Its function is as follows. Has nucleoside phosphatase activity towards nucleoside triphosphates and nucleoside diphosphates. In Streptococcus thermophilus (strain CNRZ 1066), this protein is Nucleoside triphosphate/diphosphate phosphatase.